The chain runs to 301 residues: Ribosomal protein L11 methyltransferase (301 aa).

The S-adenosyl-L-methionine site is built by Thr130, Gly151, Asp172, and Asn239.

Belongs to the methyltransferase superfamily. PrmA family.

The protein resides in the cytoplasm. It carries out the reaction L-lysyl-[protein] + 3 S-adenosyl-L-methionine = N(6),N(6),N(6)-trimethyl-L-lysyl-[protein] + 3 S-adenosyl-L-homocysteine + 3 H(+). Functionally, methylates ribosomal protein L11. The protein is Ribosomal protein L11 methyltransferase of Campylobacter hominis (strain ATCC BAA-381 / DSM 21671 / CCUG 45161 / LMG 19568 / NCTC 13146 / CH001A).